The sequence spans 878 residues: Indoleacetate decarboxylase (878 aa).

In terms of domain architecture, PFL spans aspartate 42–leucine 750. The Cysteine radical intermediate role is filled by cysteine 500. The active-site Proton acceptor is glutamate 502. A Glycine radical domain is found at glycine 758–leucine 878. The residue at position 853 (glycine 853) is a Glycine radical.

It belongs to the glycyl radical enzyme (GRE) family. As to quaternary structure, homodimer (predominantly) and monomer. Requires the activating protein OsIADAE to generate the key active site glycyl radical on Gly-853 that is involved in catalysis.

The catalysed reaction is (indol-3-yl)acetate + H(+) = skatole + CO2. The protein operates within amino-acid degradation. Functionally, glycyl radical enzyme that catalyzes the terminal step of tryptophan fermentation, the decarboxylation of indoleacetate to form skatole, a malodorous compound that contributes to the characteristic smell of animal feces. No activity is detected with phenylacetate or p-hydroxyphenylacetate as substrates, indicating high substrate specificity. This chain is Indoleacetate decarboxylase, found in Tractidigestivibacter scatoligenes (Olsenella scatoligenes).